The chain runs to 523 residues: 2-isopropylmalate synthase (523 aa).

Positions 5 to 267 (VIIFDTTLRD…HTNINHHEIW (263 aa)) constitute a Pyruvate carboxyltransferase domain. Residues D14, H202, H204, and N238 each coordinate Mn(2+). The tract at residues 392–523 (RLDYFSVQSG…QNKENNKETV (132 aa)) is regulatory domain.

The protein belongs to the alpha-IPM synthase/homocitrate synthase family. LeuA type 1 subfamily. In terms of assembly, homodimer. Mn(2+) serves as cofactor.

The protein resides in the cytoplasm. It carries out the reaction 3-methyl-2-oxobutanoate + acetyl-CoA + H2O = (2S)-2-isopropylmalate + CoA + H(+). Its pathway is amino-acid biosynthesis; L-leucine biosynthesis; L-leucine from 3-methyl-2-oxobutanoate: step 1/4. Catalyzes the condensation of the acetyl group of acetyl-CoA with 3-methyl-2-oxobutanoate (2-ketoisovalerate) to form 3-carboxy-3-hydroxy-4-methylpentanoate (2-isopropylmalate). The chain is 2-isopropylmalate synthase from Klebsiella pneumoniae (strain 342).